Here is a 218-residue protein sequence, read N- to C-terminus: Pyridoxal phosphate homeostasis protein (218 aa).

At Lys25 the chain carries N6-(pyridoxal phosphate)lysine.

It belongs to the pyridoxal phosphate-binding protein YggS/PROSC family.

Its function is as follows. Pyridoxal 5'-phosphate (PLP)-binding protein, which is involved in PLP homeostasis. The polypeptide is Pyridoxal phosphate homeostasis protein (Synechocystis sp. (strain ATCC 27184 / PCC 6803 / Kazusa)).